We begin with the raw amino-acid sequence, 489 residues long: Rhamnulokinase (489 aa).

13-17 (ASSGR) contributes to the ATP binding site. A disulfide bond links C68 and C222. Substrate is bound by residues G83 and 236–238 (HDT). D237 (proton acceptor) is an active-site residue. T259 lines the ATP pocket. N296 serves as a coordination point for substrate. An ATP-binding site is contributed by Q304. C353 and C370 form a disulfide bridge. G402 lines the ATP pocket. The cysteines at positions 413 and 417 are disulfide-linked.

The protein belongs to the rhamnulokinase family. As to quaternary structure, monomer. Mg(2+) serves as cofactor.

The catalysed reaction is L-rhamnulose + ATP = L-rhamnulose 1-phosphate + ADP + H(+). The protein operates within carbohydrate degradation; L-rhamnose degradation; glycerone phosphate from L-rhamnose: step 2/3. Functionally, involved in the catabolism of L-rhamnose (6-deoxy-L-mannose). Catalyzes the transfer of the gamma-phosphate group from ATP to the 1-hydroxyl group of L-rhamnulose to yield L-rhamnulose 1-phosphate. The polypeptide is Rhamnulokinase (Escherichia coli (strain K12 / DH10B)).